A 175-amino-acid chain; its full sequence is Replication restart protein PriC (175 aa).

Belongs to the PriC family. As to quaternary structure, monomer. Oligomerizes in the absence of DNA. Component of the replication restart primosome, which is composed of PriA, PriB, PriC, DnaB and DnaT; DnaG primase associates transiently with this complex. Interacts with the C-terminus of SSB; this interaction is required for DnaB loading onto substrate replication forks. Interacts with DnaB alone and in the DnaB-DnaC complex, probably 1:1 binding with DnaB.

Involved in the restart of stalled replication forks, which reloads the replicative helicase (DnaB) on sites other than the origin of replication. Recognizes abandoned replication forks and remodels DNA single-stranded binding protein (SSB) on ssDNA to uncover a loading site for DnaB. There are several restart pathways, the PriA-PriC pathway is a minor restart pathway. Also part of the minor PriC-Rep pathway for restart of stalled replication forks, which has a different substrate specificity than PriA. priB and priC have redundant roles in the cell. Stimulates the 3'-5' helicase activity of Rep helicase in vitro. In vitro can load the DnaB replicative helicase from a DnaB-DnaC complex on an SSB-coated stalled replication fork with no leading- or lagging-strand (or with a gap between the leading strand and fork junction) in the absence of other primosome proteins (PriA, PriB or DnaT). Also part of the major restart pathway with PriA, PriB, DnaB, DnaT and DnaG primase. PriC may contribute to the stability of the preprimosome complex. Preferentially binds approximately 7-9 nucleotides of single-stranded (ss)DNA, also binds double-stranded (ds)DNA. PriB is probably more important in the cell than PriC. This chain is Replication restart protein PriC, found in Escherichia coli (strain K12).